The primary structure comprises 358 residues: Photosystem II protein D1 (358 aa).

A run of 3 helical transmembrane segments spans residues 28-45 (YVGW…AAAI), 117-132 (HFLI…QWEL), and 141-155 (WICV…AAFA). His117 contributes to the chlorophyll a binding site. Trp125 is a pheophytin a binding site. Residues Asp169 and Glu188 each coordinate [CaMn4O5] cluster. A helical transmembrane segment spans residues 196–217 (FHMIGVAGMFGGSLFSAMHGSL). Residue His197 coordinates chlorophyll a. Residues His214 and 263–264 (SF) contribute to the a quinone site. His214 lines the Fe cation pocket. A Fe cation-binding site is contributed by His271. The helical transmembrane segment at 273–287 (FLAAWPVICIWITSL) threads the bilayer. Residues His331, Glu332, Asp341, and Ala343 each contribute to the [CaMn4O5] cluster site. Positions 344-358 (AAESTPVALIAPAIG) are excised as a propeptide.

The protein belongs to the reaction center PufL/M/PsbA/D family. In terms of assembly, PSII is composed of 1 copy each of membrane proteins PsbA, PsbB, PsbC, PsbD, PsbE, PsbF, PsbH, PsbI, PsbJ, PsbK, PsbL, PsbM, PsbT, PsbX, PsbY, Psb30/Ycf12, peripheral proteins PsbO, CyanoQ (PsbQ), PsbU, PsbV and a large number of cofactors. It forms dimeric complexes. The D1/D2 heterodimer binds P680, chlorophylls that are the primary electron donor of PSII, and subsequent electron acceptors. It shares a non-heme iron and each subunit binds pheophytin, quinone, additional chlorophylls, carotenoids and lipids. D1 provides most of the ligands for the Mn4-Ca-O5 cluster of the oxygen-evolving complex (OEC). There is also a Cl(-1) ion associated with D1 and D2, which is required for oxygen evolution. The PSII complex binds additional chlorophylls, carotenoids and specific lipids. is required as a cofactor. In terms of processing, tyr-160 forms a radical intermediate that is referred to as redox-active TyrZ, YZ or Y-Z. C-terminally processed by CtpA; processing is essential to allow assembly of the oxygen-evolving complex and thus photosynthetic growth.

It is found in the cellular thylakoid membrane. It catalyses the reaction 2 a plastoquinone + 4 hnu + 2 H2O = 2 a plastoquinol + O2. In terms of biological role, photosystem II (PSII) is a light-driven water:plastoquinone oxidoreductase that uses light energy to abstract electrons from H(2)O, generating O(2) and a proton gradient subsequently used for ATP formation. It consists of a core antenna complex that captures photons, and an electron transfer chain that converts photonic excitation into a charge separation. The D1/D2 (PsbA/PsbD) reaction center heterodimer binds P680, the primary electron donor of PSII as well as several subsequent electron acceptors. This chain is Photosystem II protein D1, found in Prochlorococcus marinus (strain MIT 9303).